Reading from the N-terminus, the 242-residue chain is ATP synthase subunit a (242 aa).

Helical transmembrane passes span 29-49 (SSIY…LAFY), 84-104 (FIPL…LGMT), 114-134 (IIVT…VGFV), 140-160 (FLTL…MIVI), 181-201 (MAGH…MIYL), and 203-223 (FLPI…AILQ).

The protein belongs to the ATPase A chain family. F-type ATPases have 2 components, CF(1) - the catalytic core - and CF(0) - the membrane proton channel. CF(1) has five subunits: alpha(3), beta(3), gamma(1), delta(1), epsilon(1). CF(0) has three main subunits: a(1), b(2) and c(9-12). The alpha and beta chains form an alternating ring which encloses part of the gamma chain. CF(1) is attached to CF(0) by a central stalk formed by the gamma and epsilon chains, while a peripheral stalk is formed by the delta and b chains.

It is found in the cell inner membrane. Key component of the proton channel; it plays a direct role in the translocation of protons across the membrane. In Rickettsia akari (strain Hartford), this protein is ATP synthase subunit a.